An 83-amino-acid chain; its full sequence is Arminin 3a (83 aa).

The first 18 residues, 1 to 18 (MKTVFAILFLTFIALTCA), serve as a signal peptide directing secretion. The propeptide occupies 19-57 (RNYEDLKEKIKNEVEREIFEDLEEESDELENNFKKFNDA). Ala80 is modified (alanine amide).

The protein belongs to the arminin family. As to expression, expressed in entodermal epithelium along the body column.

Its subcellular location is the secreted. The protein resides in the target cell membrane. Its function is as follows. Antimicrobial peptide with a broad-spectrum antimicrobial activity. Keeps its antibacterial activity under a wide range of salt concentrations that mimic physiological conditions of human blood, which is surprising, since Hydra is an obligate freshwater animal with nearly no salt tolerance. Does not affect red blood cells. The protein is Arminin 3a of Hydra vulgaris (Hydra).